The following is an 863-amino-acid chain: Facilitated trehalose transporter Tret1 (863 aa).

The segment at M1–T208 is disordered. Over M1 to Y398 the chain is Cytoplasmic. The segment covering K28–E46 has biased composition (basic and acidic residues). Polar residues predominate over residues S47 to D59. The segment covering A72–L85 has biased composition (low complexity). Polar residues-rich tracts occupy residues P114–G129 and K177–A187. S254, S255, and S256 each carry phosphoserine. Residues V286–I307 are disordered. Phosphoserine is present on residues S326 and S328. Positions F332–R354 are disordered. Residues R336–T347 show a composition bias toward polar residues. The chain crosses the membrane as a helical span at residues I399–A419. Over S420 to S446 the chain is Extracellular. The N-linked (GlcNAc...) asparagine glycan is linked to N434. A helical transmembrane segment spans residues W447 to I467. The Cytoplasmic portion of the chain corresponds to E468 to T479. Residues A480 to L500 traverse the membrane as a helical segment. Residues C501 to R503 are Extracellular-facing. Residues F504 to T524 form a helical membrane-spanning segment. The Cytoplasmic segment spans residues V525–R530. Residues G531–A551 form a helical membrane-spanning segment. At G552 to S558 the chain is on the extracellular side. The helical transmembrane segment at M559–P579 threads the bilayer. Residues E580–P642 are Cytoplasmic-facing. A helical transmembrane segment spans residues L643–F663. Over Y664–N679 the chain is Extracellular. A helical transmembrane segment spans residues V680 to I700. The Cytoplasmic segment spans residues D701–K706. The chain crosses the membrane as a helical span at residues I707–F727. Over Y728–C746 the chain is Extracellular. A helical transmembrane segment spans residues F747 to G767. Residues E768–K773 lie on the Cytoplasmic side of the membrane. A helical membrane pass occupies residues I774 to T794. The Extracellular segment spans residues K795 to H807. A helical membrane pass occupies residues G808–V828. At P829–M863 the chain is on the cytoplasmic side. Phosphoserine is present on residues S851 and S852.

Belongs to the major facilitator superfamily. Sugar transporter (TC 2.A.1.1) family. Trehalose transporter subfamily.

The protein localises to the cell membrane. Low-capacity facilitative transporter for trehalose. Does not transport maltose, sucrose or lactose. Mediates the bidirectional transfer of trehalose. Responsible for the transport of trehalose synthesized in the fat body and the incorporation of trehalose into other tissues that require a carbon source, thereby regulating trehalose levels in the hemolymph. This chain is Facilitated trehalose transporter Tret1, found in Drosophila mojavensis (Fruit fly).